The sequence spans 126 residues: Large ribosomal subunit protein eL28 (126 aa).

Residue S2 is modified to N-acetylserine.

This sequence belongs to the eukaryotic ribosomal protein eL28 family.

The polypeptide is Large ribosomal subunit protein eL28 (rpl-28) (Caenorhabditis elegans).